A 496-amino-acid chain; its full sequence is Cytochrome P450 3A30 (496 aa).

Cys441 is a heme binding site.

This sequence belongs to the cytochrome P450 family. Requires heme as cofactor. As to expression, highly expressed in liver and intestine. Moderate expression in gill and spleen. Low expression in kidney, brain and heart.

It localises to the endoplasmic reticulum membrane. Its subcellular location is the microsome membrane. The enzyme catalyses an organic molecule + reduced [NADPH--hemoprotein reductase] + O2 = an alcohol + oxidized [NADPH--hemoprotein reductase] + H2O + H(+). Putative steroid 6-beta-hydroxylase. The protein is Cytochrome P450 3A30 (cyp3a30) of Fundulus heteroclitus (Killifish).